A 173-amino-acid chain; its full sequence is Probable F-box protein At1g27490 (173 aa).

The F-box domain occupies 1–46 (MEWSLPVDLQEEILSRVPAKSLARWKSTPKQWKGPISIEFLHLLRS).

This is Probable F-box protein At1g27490 from Arabidopsis thaliana (Mouse-ear cress).